The primary structure comprises 277 residues: Tryptophan synthase alpha chain (277 aa).

Residues Glu43 and Glu54 each act as proton acceptor in the active site.

Belongs to the TrpA family. In terms of assembly, tetramer of two alpha and two beta chains.

The catalysed reaction is (1S,2R)-1-C-(indol-3-yl)glycerol 3-phosphate + L-serine = D-glyceraldehyde 3-phosphate + L-tryptophan + H2O. It functions in the pathway amino-acid biosynthesis; L-tryptophan biosynthesis; L-tryptophan from chorismate: step 5/5. Functionally, the alpha subunit is responsible for the aldol cleavage of indoleglycerol phosphate to indole and glyceraldehyde 3-phosphate. In Haloferax volcanii (strain ATCC 29605 / DSM 3757 / JCM 8879 / NBRC 14742 / NCIMB 2012 / VKM B-1768 / DS2) (Halobacterium volcanii), this protein is Tryptophan synthase alpha chain.